The primary structure comprises 75 residues: uncharacterized protein (75 aa).

2 helical membrane passes run 5-25 and 42-62; these read VIICLLFTYYVIWSLLPIFEI and VAIFLPIFLLLIGFTLTGSVL.

The protein localises to the membrane. This is an uncharacterized protein from Saccharomyces cerevisiae (strain ATCC 204508 / S288c) (Baker's yeast).